The following is a 714-amino-acid chain: Protein artemis (714 aa).

4 disordered regions span residues 391–500 (ELFD…ESNA), 516–577 (ESSE…TVLI), 598–617 (ALLSHDTPRDSQADDSRWKL), and 638–683 (EKDA…LTPD). A compositionally biased stretch (polar residues) spans 427–440 (NESTESYRANTAYT). A compositionally biased stretch (acidic residues) spans 447–468 (VDCEESNDDDDDDDDDDKEDDS). Polar residues-rich tracts occupy residues 484-500 (SIASCNGIPSNQQESNA) and 532-543 (GSQSLFSDSDGV). The span at 544–561 (SDSTHISSQNSSQSTHIS) shows a compositional bias: low complexity. A compositionally biased stretch (polar residues) spans 562–577 (EQGSQGWDSQMDTVLI). Composition is skewed to basic and acidic residues over residues 603–615 (DTPRDSQADDSRW) and 660–670 (RTPDLELKRDS). At serine 670 the chain carries Phosphoserine; by ATM.

It belongs to the DNA repair metallo-beta-lactamase (DRMBL) family. In terms of assembly, interacts with PRKDC. Post-translationally, phosphorylation on undefined residues by PRKDC may stimulate endonucleolytic activity on 5' and 3' hairpins and overhangs. PRKDC must remain present, even after phosphorylation, for efficient hairpin opening.

The protein resides in the nucleus. Functionally, required for V(D)J recombination, the process by which exons encoding the antigen-binding domains of immunoglobulins and T-cell receptor proteins are assembled from individual V, (D), and J gene segments. V(D)J recombination is initiated by the lymphoid specific RAG endonuclease complex, which generates site specific DNA double strand breaks (DSBs). These DSBs present two types of DNA end structures: hairpin sealed coding ends and phosphorylated blunt signal ends. These ends are independently repaired by the non homologous end joining (NHEJ) pathway to form coding and signal joints respectively. This protein exhibits single-strand specific 5'-3' exonuclease activity in isolation, and acquires endonucleolytic activity on 5' and 3' hairpins and overhangs when in a complex with PRKDC. The latter activity is required specifically for the resolution of closed hairpins prior to the formation of the coding joint. May also be required for the repair of complex DSBs induced by ionizing radiation, which require substantial end-processing prior to religation by NHEJ. The sequence is that of Protein artemis (DCLRE1C) from Gallus gallus (Chicken).